The following is a 77-amino-acid chain: Liver-expressed antimicrobial peptide 2 (77 aa).

A signal peptide spans 1 to 22; that stretch reads MWHLKLFAVLMICLLLLAQVDG. The propeptide occupies 23-37; that stretch reads SPIPQQSSAKRRPRR. Disulfide bonds link Cys54/Cys65 and Cys60/Cys70.

The protein belongs to the LEAP2 family.

Its subcellular location is the secreted. In terms of biological role, has an antimicrobial activity. The sequence is that of Liver-expressed antimicrobial peptide 2 (LEAP2) from Bos taurus (Bovine).